The following is a 97-amino-acid chain: Small ribosomal subunit protein bS20 (97 aa).

The protein belongs to the bacterial ribosomal protein bS20 family.

In terms of biological role, binds directly to 16S ribosomal RNA. The chain is Small ribosomal subunit protein bS20 from Methylibium petroleiphilum (strain ATCC BAA-1232 / LMG 22953 / PM1).